The sequence spans 91 residues: Probable insulin-like peptide gamma-type 1 (91 aa).

An N-terminal signal peptide occupies residues 1–26 (MSSYRQTLFILIILIVIILFVNEGQG). 3 disulfides stabilise this stretch: C37-C66, C49-C79, and C65-C70.

This sequence belongs to the insulin family.

The protein resides in the secreted. This is Probable insulin-like peptide gamma-type 1 (ins-11) from Caenorhabditis elegans.